The primary structure comprises 414 residues: Tyrosine--tRNA ligase (414 aa).

Tyr-35 contributes to the L-tyrosine binding site. Positions 40 to 49 match the 'HIGH' region motif; that stretch reads PTADSLHVGH. Positions 164 and 168 each coordinate L-tyrosine. The 'KMSKS' region signature appears at 226–230; it reads KFGKT. Lys-229 serves as a coordination point for ATP. The 68-residue stretch at 347-414 folds into the S4 RNA-binding domain; it reads TKVIDALVEL…KKKYFVILVK (68 aa).

Belongs to the class-I aminoacyl-tRNA synthetase family. TyrS type 1 subfamily. As to quaternary structure, homodimer.

It is found in the cytoplasm. It carries out the reaction tRNA(Tyr) + L-tyrosine + ATP = L-tyrosyl-tRNA(Tyr) + AMP + diphosphate + H(+). In terms of biological role, catalyzes the attachment of tyrosine to tRNA(Tyr) in a two-step reaction: tyrosine is first activated by ATP to form Tyr-AMP and then transferred to the acceptor end of tRNA(Tyr). The polypeptide is Tyrosine--tRNA ligase (Mycoplasma capricolum subsp. capricolum (strain California kid / ATCC 27343 / NCTC 10154)).